The chain runs to 643 residues: Phosphomethylpyrimidine synthase (643 aa).

Residues Asn248, Met277, Tyr306, His342, Ser362 to Gly364, Asp403 to Arg406, and Glu442 each bind substrate. Residue His446 coordinates Zn(2+). Residue Tyr469 participates in substrate binding. Residue His510 coordinates Zn(2+). [4Fe-4S] cluster is bound by residues Cys590, Cys593, and Cys598.

This sequence belongs to the ThiC family. In terms of assembly, homodimer. The cofactor is [4Fe-4S] cluster.

It carries out the reaction 5-amino-1-(5-phospho-beta-D-ribosyl)imidazole + S-adenosyl-L-methionine = 4-amino-2-methyl-5-(phosphooxymethyl)pyrimidine + CO + 5'-deoxyadenosine + formate + L-methionine + 3 H(+). It functions in the pathway cofactor biosynthesis; thiamine diphosphate biosynthesis. Functionally, catalyzes the synthesis of the hydroxymethylpyrimidine phosphate (HMP-P) moiety of thiamine from aminoimidazole ribotide (AIR) in a radical S-adenosyl-L-methionine (SAM)-dependent reaction. This Paraburkholderia phytofirmans (strain DSM 17436 / LMG 22146 / PsJN) (Burkholderia phytofirmans) protein is Phosphomethylpyrimidine synthase.